The sequence spans 1764 residues: Cilia- and flagella-associated protein 44 (1764 aa).

7 WD repeats span residues 115–157 (GTER…IVLR), 160–199 (AFSQ…TGLK), 208–248 (GNVE…VVLT), 255–294 (CHDG…DAEP), 361–400 (HPAG…VLAE), 454–493 (AHKG…QPGT), and 495–534 (VPGM…GVLL). Residues 570-654 (QLVVPKPKRP…GGPSSTTGEL (85 aa)) are disordered. The span at 575 to 584 (KPKRPKKKKG) shows a compositional bias: basic residues. Basic and acidic residues-rich tracts occupy residues 585-596 (KNDGEEGDKEGG) and 604-628 (GEDK…GRAA). A compositionally biased stretch (acidic residues) spans 629–641 (EEEEEEEADDEAD). 3 WD repeats span residues 649–692 (STTG…PLAA), 707–752 (AHAG…LHDM), and 753–791 (QSGR…ELAP). The stretch at 821 to 850 (YTLEEEKQQAERDQQVREAEEKKLSVRQRL) forms a coiled coil. 2 disordered regions span residues 972-1003 (AAAG…GDAA) and 1426-1468 (KKKA…CPPG). Residues 1434–1462 (GEDDYDSEEDEEDEDMGDDEVDDDDDGGE) are compositionally biased toward acidic residues. 3 coiled-coil regions span residues 1479–1517 (DLRE…LVEQ), 1567–1674 (LVFS…DAKI), and 1729–1758 (EERD…LRRK).

The protein belongs to the CFAP44 family.

The protein resides in the cell projection. It localises to the cilium. The protein localises to the flagellum. It is found in the cytoplasm. Its subcellular location is the cytoskeleton. The protein resides in the flagellum axoneme. In terms of biological role, flagellar protein involved in sperm flagellum axoneme organization and function. The polypeptide is Cilia- and flagella-associated protein 44 (Chlamydomonas reinhardtii (Chlamydomonas smithii)).